The following is a 224-amino-acid chain: Stage II sporulation protein R (224 aa).

The protein is Stage II sporulation protein R (spoIIR) of Bacillus subtilis (strain 168).